Here is a 77-residue protein sequence, read N- to C-terminus: U8-lycotoxin-Ls1b (77 aa).

The N-terminal stretch at 1–20 (MKLIIFTGLVLFAIVSLIEA) is a signal peptide. Residues 21–26 (QAENEK) constitute a propeptide that is removed on maturation.

The protein belongs to the neurotoxin 19 (CSTX) family. 08 (U8-Lctx) subfamily. In terms of processing, contains 4 disulfide bonds. Expressed by the venom gland.

It localises to the secreted. In Lycosa singoriensis (Wolf spider), this protein is U8-lycotoxin-Ls1b.